The sequence spans 567 residues: Phenylalanine ammonia-lyase (567 aa).

Tyrosine 78 acts as the Proton donor/acceptor in catalysis. Residues alanine 167 to glycine 169 constitute a cross-link (5-imidazolinone (Ala-Gly)). Position 168 is a 2,3-didehydroalanine (Ser) (serine 168). Residues asparagine 223, glutamine 311, arginine 317, asparagine 347, lysine 419, glutamate 448, and asparagine 451 each coordinate (E)-cinnamate.

The protein belongs to the PAL/histidase family. In terms of assembly, homotetramer. In terms of processing, contains an active site 4-methylidene-imidazol-5-one (MIO), which is formed autocatalytically by cyclization and dehydration of residues Ala-Ser-Gly.

The protein resides in the cytoplasm. The catalysed reaction is L-phenylalanine = (E)-cinnamate + NH4(+). It functions in the pathway phenylpropanoid metabolism; trans-cinnamate biosynthesis; trans-cinnamate from L-phenylalanine: step 1/1. In terms of biological role, catalyzes the non-oxidative deamination of L-phenylalanine to form trans-cinnamic acid, the first step in the phenylpropanoid pathway. The protein is Phenylalanine ammonia-lyase of Trichormus variabilis (strain ATCC 29413 / PCC 7937) (Anabaena variabilis).